We begin with the raw amino-acid sequence, 221 residues long: Lipoprotein-releasing system ATP-binding protein LolD (221 aa).

The ABC transporter domain maps to 6 to 220 (LTLKNVSKHY…YKLKHGALNM (215 aa)). 42–49 (GSSGSGKS) serves as a coordination point for ATP.

The protein belongs to the ABC transporter superfamily. Lipoprotein translocase (TC 3.A.1.125) family. The complex is composed of two ATP-binding proteins (LolD) and two transmembrane proteins (LolC and LolE).

It localises to the cell inner membrane. Part of the ABC transporter complex LolCDE involved in the translocation of mature outer membrane-directed lipoproteins, from the inner membrane to the periplasmic chaperone, LolA. Responsible for the formation of the LolA-lipoprotein complex in an ATP-dependent manner. The sequence is that of Lipoprotein-releasing system ATP-binding protein LolD from Rickettsia bellii (strain RML369-C).